The sequence spans 582 residues: DBIRD complex subunit ZNF326 (582 aa).

Residues 1-124 (MDFEDDYTHS…YRNSLDSFGG (124 aa)) form a mediates transcriptional activation region. A phosphoserine mark is found at Ser-48, Ser-56, Ser-63, Ser-69, Ser-81, Ser-82, Ser-91, Ser-106, Ser-114, Ser-118, Ser-121, and Ser-137. Residue Lys-140 forms a Glycyl lysine isopeptide (Lys-Gly) (interchain with G-Cter in SUMO2) linkage. The interval 154–194 (YSSYSSFSSPHMKPAPVGSRGRGTPAYPESTFGSRNYDAFG) is disordered. Residue Arg-173 is modified to Omega-N-methylarginine. Phosphoserine is present on Ser-212. At Arg-235 the chain carries Omega-N-methylarginine. Residues 238–260 (KRKMMQPFNKPSGTFIKKPKLAK) carry the Bipartite nuclear localization signal motif. A Glycyl lysine isopeptide (Lys-Gly) (interchain with G-Cter in SUMO2) cross-link involves residue Lys-240. Positions 243–302 (QPFNKPSGTFIKKPKLAKPMEKISLSKSPTKTDPKNEEEEKRRIEARREKQRRRREKNSE) are disordered. Lys-247 is modified (N6-acetyllysine; alternate). Lys-247 participates in a covalent cross-link: Glycyl lysine isopeptide (Lys-Gly) (interchain with G-Cter in SUMO2); alternate. Position 249 is a phosphoserine (Ser-249). Thr-251 carries the phosphothreonine modification. Residues Lys-254 and Lys-264 each participate in a glycyl lysine isopeptide (Lys-Gly) (interchain with G-Cter in SUMO2) cross-link. Ser-270 carries the phosphoserine modification. Basic and acidic residues predominate over residues 272–290 (TKTDPKNEEEEKRRIEARR). A C2H2 AKAP95-type 1 zinc finger spans residues 314–336 (CSFCKFRTFEEKDIELHLESSSH). Lys-401 participates in a covalent cross-link: Glycyl lysine isopeptide (Lys-Gly) (interchain with G-Cter in SUMO2). The C2H2 AKAP95-type 2 zinc-finger motif lies at 407-430 (CSACSVYIPALHSSVQQHLKSPDH). Glycyl lysine isopeptide (Lys-Gly) (interchain with G-Cter in SUMO2) cross-links involve residues Lys-459 and Lys-467. A disordered region spans residues 472–582 (FEIQDHSQDQ…DFPVEQPEEN (111 aa)). Acidic residues predominate over residues 483-523 (IEGDEEDEEKIDEPIEEEEDEDEEEEAEEVGEVEEVEEVEE). Gly residues predominate over residues 530–545 (EGEGNIQGVGEGGEVG). Residues 552–567 (GVGEVEEVEELEEETA) are compositionally biased toward acidic residues.

It belongs to the AKAP95 family. Component of the DBIRD complex. Interacts with CCAR2; the interaction is direct.

It is found in the nucleus matrix. In terms of biological role, core component of the DBIRD complex, a multiprotein complex that acts at the interface between core mRNP particles and RNA polymerase II (RNAPII) and integrates transcript elongation with the regulation of alternative splicing: the DBIRD complex affects local transcript elongation rates and alternative splicing of a large set of exons embedded in (A + T)-rich DNA regions. May play a role in neuronal differentiation and is able to bind DNA and activate expression in vitro. The polypeptide is DBIRD complex subunit ZNF326 (ZNF326) (Homo sapiens (Human)).